Here is a 397-residue protein sequence, read N- to C-terminus: Carbamoyl phosphate synthase small chain (397 aa).

The tract at residues 1–204 is CPSase; the sequence is MKHVLRKEKT…NAKLKEKIWH (204 aa). L-glutamine contacts are provided by S57, G252, and G254. One can recognise a Glutamine amidotransferase type-1 domain in the interval 204–391; that stretch reads HVVVYDFGVK…IKLMKKSYNS (188 aa). The active-site Nucleophile is C280. Positions 281, 284, 322, and 325 each coordinate L-glutamine. Residues H364 and E366 contribute to the active site.

The protein belongs to the CarA family. In terms of assembly, composed of two chains; the small (or glutamine) chain promotes the hydrolysis of glutamine to ammonia, which is used by the large (or ammonia) chain to synthesize carbamoyl phosphate. Tetramer of heterodimers (alpha,beta)4.

It carries out the reaction hydrogencarbonate + L-glutamine + 2 ATP + H2O = carbamoyl phosphate + L-glutamate + 2 ADP + phosphate + 2 H(+). The enzyme catalyses L-glutamine + H2O = L-glutamate + NH4(+). The protein operates within amino-acid biosynthesis; L-arginine biosynthesis; carbamoyl phosphate from bicarbonate: step 1/1. It functions in the pathway pyrimidine metabolism; UMP biosynthesis via de novo pathway; (S)-dihydroorotate from bicarbonate: step 1/3. Functionally, small subunit of the glutamine-dependent carbamoyl phosphate synthetase (CPSase). CPSase catalyzes the formation of carbamoyl phosphate from the ammonia moiety of glutamine, carbonate, and phosphate donated by ATP, constituting the first step of 2 biosynthetic pathways, one leading to arginine and/or urea and the other to pyrimidine nucleotides. The small subunit (glutamine amidotransferase) binds and cleaves glutamine to supply the large subunit with the substrate ammonia. The sequence is that of Carbamoyl phosphate synthase small chain from Buchnera aphidicola subsp. Baizongia pistaciae (strain Bp).